A 108-amino-acid polypeptide reads, in one-letter code: DNA-binding protein HBbu (108 aa).

Belongs to the bacterial histone-like protein family.

In terms of biological role, histone-like DNA-binding protein which is capable of wrapping DNA to stabilize it, and thus to prevent its denaturation under extreme environmental conditions. In Borrelia parkeri, this protein is DNA-binding protein HBbu (hbb).